The chain runs to 469 residues: Arginine biosynthesis bifunctional protein ArgJ, mitochondrial (469 aa).

Residues T199, K228, T239, E325, N464, and T469 each coordinate substrate. The active-site Nucleophile is T239.

It belongs to the ArgJ family. As to quaternary structure, heterodimer of an alpha and a beta chain. Post-translationally, the alpha and beta chains are autoproteolytically processed from a single precursor protein within the mitochondrion.

Its subcellular location is the mitochondrion matrix. The enzyme catalyses N(2)-acetyl-L-ornithine + L-glutamate = N-acetyl-L-glutamate + L-ornithine. The catalysed reaction is L-glutamate + acetyl-CoA = N-acetyl-L-glutamate + CoA + H(+). Its pathway is amino-acid biosynthesis; L-arginine biosynthesis; L-ornithine and N-acetyl-L-glutamate from L-glutamate and N(2)-acetyl-L-ornithine (cyclic): step 1/1. The protein operates within amino-acid biosynthesis; L-arginine biosynthesis; N(2)-acetyl-L-ornithine from L-glutamate: step 1/4. Its function is as follows. Catalyzes two activities which are involved in the cyclic version of arginine biosynthesis: the synthesis of acetylglutamate from glutamate and acetyl-CoA, and of ornithine by transacetylation between acetylornithine and glutamate. In Neurospora crassa (strain ATCC 24698 / 74-OR23-1A / CBS 708.71 / DSM 1257 / FGSC 987), this protein is Arginine biosynthesis bifunctional protein ArgJ, mitochondrial.